The following is a 197-amino-acid chain: dITP/XTP pyrophosphatase (197 aa).

Position 8–13 (8–13 (TGNAGK)) interacts with substrate. Mg(2+)-binding residues include glutamate 40 and aspartate 69. Aspartate 69 functions as the Proton acceptor in the catalytic mechanism. Residues serine 70, 154-157 (FGYD), lysine 177, and 182-183 (HR) contribute to the substrate site.

It belongs to the HAM1 NTPase family. Homodimer. Mg(2+) serves as cofactor.

The catalysed reaction is XTP + H2O = XMP + diphosphate + H(+). The enzyme catalyses dITP + H2O = dIMP + diphosphate + H(+). It carries out the reaction ITP + H2O = IMP + diphosphate + H(+). Its function is as follows. Pyrophosphatase that catalyzes the hydrolysis of nucleoside triphosphates to their monophosphate derivatives, with a high preference for the non-canonical purine nucleotides XTP (xanthosine triphosphate), dITP (deoxyinosine triphosphate) and ITP. Seems to function as a house-cleaning enzyme that removes non-canonical purine nucleotides from the nucleotide pool, thus preventing their incorporation into DNA/RNA and avoiding chromosomal lesions. The sequence is that of dITP/XTP pyrophosphatase (rdgB) from Salmonella paratyphi A (strain ATCC 9150 / SARB42).